The following is a 162-amino-acid chain: Large ribosomal subunit protein uL10 (162 aa).

Belongs to the universal ribosomal protein uL10 family. As to quaternary structure, part of the ribosomal stalk of the 50S ribosomal subunit. The N-terminus interacts with L11 and the large rRNA to form the base of the stalk. The C-terminus forms an elongated spine to which L12 dimers bind in a sequential fashion forming a multimeric L10(L12)X complex.

Its function is as follows. Forms part of the ribosomal stalk, playing a central role in the interaction of the ribosome with GTP-bound translation factors. In Borrelia garinii subsp. bavariensis (strain ATCC BAA-2496 / DSM 23469 / PBi) (Borreliella bavariensis), this protein is Large ribosomal subunit protein uL10.